Here is a 135-residue protein sequence, read N- to C-terminus: Large ribosomal subunit protein uL16c (135 aa).

The protein belongs to the universal ribosomal protein uL16 family. As to quaternary structure, part of the 50S ribosomal subunit.

It is found in the plastid. The protein resides in the chloroplast. The sequence is that of Large ribosomal subunit protein uL16c from Ranunculus macranthus (Large buttercup).